The primary structure comprises 416 residues: uncharacterized protein (416 aa).

Residues cysteine 63, cysteine 75, cysteine 78, and cysteine 152 each contribute to the [4Fe-4S] cluster site. Residues glutamine 253, phenylalanine 280, glutamate 300, and aspartate 348 each coordinate S-adenosyl-L-methionine. Cysteine 374 serves as the catalytic Nucleophile.

Belongs to the class I-like SAM-binding methyltransferase superfamily. RNA M5U methyltransferase family.

This is an uncharacterized protein from Agrobacterium fabrum (strain C58 / ATCC 33970) (Agrobacterium tumefaciens (strain C58)).